Here is a 98-residue protein sequence, read N- to C-terminus: NADH-ubiquinone oxidoreductase chain 4L (98 aa).

3 helical membrane-spanning segments follow: residues 1-21 (MMSI…GVLI), 28-48 (STLL…ALLI), and 59-79 (APLI…ALLV).

Belongs to the complex I subunit 4L family. Core subunit of respiratory chain NADH dehydrogenase (Complex I) which is composed of 45 different subunits.

It localises to the mitochondrion inner membrane. The enzyme catalyses a ubiquinone + NADH + 5 H(+)(in) = a ubiquinol + NAD(+) + 4 H(+)(out). Core subunit of the mitochondrial membrane respiratory chain NADH dehydrogenase (Complex I) which catalyzes electron transfer from NADH through the respiratory chain, using ubiquinone as an electron acceptor. Part of the enzyme membrane arm which is embedded in the lipid bilayer and involved in proton translocation. The protein is NADH-ubiquinone oxidoreductase chain 4L (MT-ND4L) of Lagorchestes hirsutus (Rufous hare-wallaby).